We begin with the raw amino-acid sequence, 354 residues long: Uroporphyrinogen decarboxylase (354 aa).

Residues Arg-27 to Arg-31, Asp-77, Tyr-154, Thr-209, and His-327 each bind substrate.

It belongs to the uroporphyrinogen decarboxylase family. In terms of assembly, homodimer.

It is found in the cytoplasm. The catalysed reaction is uroporphyrinogen III + 4 H(+) = coproporphyrinogen III + 4 CO2. It participates in porphyrin-containing compound metabolism; protoporphyrin-IX biosynthesis; coproporphyrinogen-III from 5-aminolevulinate: step 4/4. Functionally, catalyzes the decarboxylation of four acetate groups of uroporphyrinogen-III to yield coproporphyrinogen-III. This Edwardsiella ictaluri (strain 93-146) protein is Uroporphyrinogen decarboxylase.